Reading from the N-terminus, the 299-residue chain is Probable alpha-L-glutamate ligase 2 (299 aa).

The 184-residue stretch at 104–287 (MQLMSRRGIG…VAGAIIEFVE (184 aa)) folds into the ATP-grasp domain. ATP is bound by residues lysine 141, 178–179 (EY), aspartate 187, and 211–213 (RSN). Residues aspartate 248, glutamate 260, and asparagine 262 each contribute to the Mg(2+) site. Aspartate 248, glutamate 260, and asparagine 262 together coordinate Mn(2+).

Belongs to the RimK family. Mg(2+) is required as a cofactor. The cofactor is Mn(2+).

The chain is Probable alpha-L-glutamate ligase 2 from Shewanella sp. (strain MR-4).